Here is a 145-residue protein sequence, read N- to C-terminus: Large ribosomal subunit protein bL17 (145 aa).

Belongs to the bacterial ribosomal protein bL17 family. In terms of assembly, part of the 50S ribosomal subunit. Contacts protein L32.

This is Large ribosomal subunit protein bL17 from Orientia tsutsugamushi (strain Boryong) (Rickettsia tsutsugamushi).